Consider the following 728-residue polypeptide: 1,4-alpha-glucan branching enzyme GlgB (728 aa).

Catalysis depends on aspartate 405, which acts as the Nucleophile. Glutamate 458 functions as the Proton donor in the catalytic mechanism.

The protein belongs to the glycosyl hydrolase 13 family. GlgB subfamily. In terms of assembly, monomer.

The catalysed reaction is Transfers a segment of a (1-&gt;4)-alpha-D-glucan chain to a primary hydroxy group in a similar glucan chain.. Its pathway is glycan biosynthesis; glycogen biosynthesis. In terms of biological role, catalyzes the formation of the alpha-1,6-glucosidic linkages in glycogen by scission of a 1,4-alpha-linked oligosaccharide from growing alpha-1,4-glucan chains and the subsequent attachment of the oligosaccharide to the alpha-1,6 position. This is 1,4-alpha-glucan branching enzyme GlgB from Escherichia coli O139:H28 (strain E24377A / ETEC).